The sequence spans 152 residues: Sulfur-rich protein (152 aa).

A disordered region spans residues 1–20 (MSTVPVVQGAGSSNSAQDIS). Helical transmembrane passes span 43–63 (VGLVVIGLLLVIATLIFLVSA) and 69–89 (AIYLVAIPAILGCVNICVGIL).

It localises to the membrane. The polypeptide is Sulfur-rich protein (srp) (Chlamydia trachomatis serovar A (strain ATCC VR-571B / DSM 19440 / HAR-13)).